The chain runs to 229 residues: Potassium/proton antiporter CemA (229 aa).

The next 3 helical transmembrane spans lie at 6–26, 107–127, and 189–209; these read AFIP…ISLC, ILHF…SFWG, and ILSG…KYWI.

This sequence belongs to the CemA family.

It is found in the plastid. Its subcellular location is the chloroplast inner membrane. It carries out the reaction K(+)(in) + H(+)(out) = K(+)(out) + H(+)(in). Its function is as follows. Contributes to K(+)/H(+) antiport activity by supporting proton efflux to control proton extrusion and homeostasis in chloroplasts in a light-dependent manner to modulate photosynthesis. Prevents excessive induction of non-photochemical quenching (NPQ) under continuous-light conditions. Indirectly promotes efficient inorganic carbon uptake into chloroplasts. This Nasturtium officinale (Watercress) protein is Potassium/proton antiporter CemA.